We begin with the raw amino-acid sequence, 110 residues long: Glutaredoxin-2 (110 aa).

In terms of domain architecture, Glutaredoxin spans 6 to 106; that stretch reads KAFVEKAISN…KMIAELKENK (101 aa). A disulfide bridge links cysteine 26 with cysteine 29.

The protein belongs to the glutaredoxin family.

The disulfide bond functions as an electron carrier in the glutathione-dependent synthesis of deoxyribonucleotides by the enzyme ribonucleotide reductase. In addition, it is also involved in reducing some disulfides in a coupled system with glutathione reductase. Thioltransferase catalyzes cellular thiol-disulfide transhydrogenation reactions. It transfers reducing equivalents to cytosolic protein and nonprotein disulfides. This is Glutaredoxin-2 (grx2) from Schizosaccharomyces pombe (strain 972 / ATCC 24843) (Fission yeast).